Here is a 115-residue protein sequence, read N- to C-terminus: Large ribosomal subunit protein bL19 (115 aa).

Belongs to the bacterial ribosomal protein bL19 family.

Functionally, this protein is located at the 30S-50S ribosomal subunit interface and may play a role in the structure and function of the aminoacyl-tRNA binding site. The polypeptide is Large ribosomal subunit protein bL19 (Coxiella burnetii (strain CbuK_Q154) (Coxiella burnetii (strain Q154))).